Reading from the N-terminus, the 137-residue chain is Golgin subfamily A member 7 (137 aa).

Residues Cys-69 and Cys-72 are each lipidated (S-palmitoyl cysteine).

This sequence belongs to the ERF4 family. Interacts with ZDHHC9.

The protein localises to the golgi apparatus membrane. May be involved in protein transport from Golgi to cell surface. The ZDHHC9-GOLGA7 complex is a palmitoyltransferase specific for HRAS and NRAS. This Gallus gallus (Chicken) protein is Golgin subfamily A member 7 (GOLGA7).